The following is a 987-amino-acid chain: UvrABC system protein A (987 aa).

33–40 is an ATP binding site; sequence GLSGSGKS. The C4-type zinc finger occupies 255–282; the sequence is CPVCDYSLPELEPRLFSFNAPVGACPSC. ABC transporter domains lie at 312–589 and 609–938; these read WDRR…PRSL and PNPK…QFLA. Position 642–649 (642–649) interacts with ATP; that stretch reads GVSGSGKS. The C4-type zinc-finger motif lies at 741–767; it reads CEACQGDGMIKVEMHFLPDVYVPCDVC. Residues 948–987 are disordered; it reads ETRPAAMANKPDARPPRKVKPEKVAKAAKSATKKTAKKAS. Residues 958–972 are compositionally biased toward basic and acidic residues; it reads PDARPPRKVKPEKVA. Over residues 978–987 the composition is skewed to basic residues; it reads ATKKTAKKAS.

It belongs to the ABC transporter superfamily. UvrA family. In terms of assembly, forms a heterotetramer with UvrB during the search for lesions.

Its subcellular location is the cytoplasm. The UvrABC repair system catalyzes the recognition and processing of DNA lesions. UvrA is an ATPase and a DNA-binding protein. A damage recognition complex composed of 2 UvrA and 2 UvrB subunits scans DNA for abnormalities. When the presence of a lesion has been verified by UvrB, the UvrA molecules dissociate. The polypeptide is UvrABC system protein A (Xanthomonas axonopodis pv. citri (strain 306)).